A 196-amino-acid chain; its full sequence is Large ribosomal subunit protein uL10 (196 aa).

Residues 169-196 are disordered; sequence KAAECPAEAPQPAAETPAEAPEAPADAE. The span at 172-196 shows a compositional bias: low complexity; that stretch reads ECPAEAPQPAAETPAEAPEAPADAE.

Belongs to the universal ribosomal protein uL10 family. In terms of assembly, part of the ribosomal stalk of the 50S ribosomal subunit. The N-terminus interacts with L11 and the large rRNA to form the base of the stalk. The C-terminus forms an elongated spine to which L12 dimers bind in a sequential fashion forming a multimeric L10(L12)X complex.

Forms part of the ribosomal stalk, playing a central role in the interaction of the ribosome with GTP-bound translation factors. This is Large ribosomal subunit protein uL10 from Mycobacterium avium (strain 104).